Reading from the N-terminus, the 1134-residue chain is Tetrathionate reductase subunit A (1134 aa).

Residues 1–31 (MQLSRRDFIKGLVAVGSASVFLAGYSETVDR) constitute a signal peptide (tat-type signal). The 4Fe-4S Mo/W bis-MGD-type domain occupies 46-133 (GRIVHSACLG…DGIHYLYDPY (88 aa)). The [4Fe-4S] cluster site is built by cysteine 53, cysteine 56, cysteine 60, and cysteine 119.

It belongs to the prokaryotic molybdopterin-containing oxidoreductase family. Probably composed of three subunits: TtrA, TtrB and TtrC. Precursor interacts with TtrD. It depends on [4Fe-4S] cluster as a cofactor. Requires Mo-bis(molybdopterin guanine dinucleotide) as cofactor. Post-translationally, exported by the Tat system. The position of the signal peptide cleavage has not been experimentally proven.

It localises to the cell membrane. Functionally, part of a membrane-bound tetrathionate reductase that catalyzes the reduction of tetrathionate to thiosulfate. TtrA is the catalytic subunit. This chain is Tetrathionate reductase subunit A (ttrA), found in Archaeoglobus fulgidus (strain ATCC 49558 / DSM 4304 / JCM 9628 / NBRC 100126 / VC-16).